A 405-amino-acid polypeptide reads, in one-letter code: L-rhamnonate dehydratase (405 aa).

Residues histidine 33 and arginine 59 each coordinate substrate. Mg(2+) is bound by residues aspartate 226, glutamate 252, and glutamate 280. Residue histidine 329 is the Proton acceptor of the active site. Glutamate 349 is a substrate binding site.

It belongs to the mandelate racemase/muconate lactonizing enzyme family. RhamD subfamily. Homooctamer; tetramer of dimers. The cofactor is Mg(2+).

The catalysed reaction is L-rhamnonate = 2-dehydro-3-deoxy-L-rhamnonate + H2O. Functionally, catalyzes the dehydration of L-rhamnonate to 2-keto-3-deoxy-L-rhamnonate (KDR). This Escherichia coli O9:H4 (strain HS) protein is L-rhamnonate dehydratase.